The sequence spans 910 residues: Protein translocase subunit SecA 1 (910 aa).

ATP contacts are provided by residues Gln86, 104–108 (GEGKT), and Asp512. Residues Cys894, Cys896, Cys905, and His906 each contribute to the Zn(2+) site.

The protein belongs to the SecA family. As to quaternary structure, monomer and homodimer. Part of the essential Sec protein translocation apparatus which comprises SecA, SecYEG and auxiliary proteins SecDF-YajC and YidC. Zn(2+) serves as cofactor.

It localises to the cell inner membrane. The protein localises to the cytoplasm. The enzyme catalyses ATP + H2O + cellular proteinSide 1 = ADP + phosphate + cellular proteinSide 2.. Part of the Sec protein translocase complex. Interacts with the SecYEG preprotein conducting channel. Has a central role in coupling the hydrolysis of ATP to the transfer of proteins into and across the cell membrane, serving both as a receptor for the preprotein-SecB complex and as an ATP-driven molecular motor driving the stepwise translocation of polypeptide chains across the membrane. The polypeptide is Protein translocase subunit SecA 1 (Bordetella avium (strain 197N)).